The sequence spans 387 residues: Succinate--CoA ligase [ADP-forming] subunit beta (387 aa).

ATP-binding positions include lysine 46, glycine 53–glycine 55, glutamate 99, alanine 102, and glutamate 107. Mg(2+) is bound by residues asparagine 199 and aspartate 213. Residues asparagine 264 and glycine 321–valine 323 contribute to the substrate site.

Belongs to the succinate/malate CoA ligase beta subunit family. Heterotetramer of two alpha and two beta subunits. Mg(2+) is required as a cofactor.

It catalyses the reaction succinate + ATP + CoA = succinyl-CoA + ADP + phosphate. The enzyme catalyses GTP + succinate + CoA = succinyl-CoA + GDP + phosphate. The protein operates within carbohydrate metabolism; tricarboxylic acid cycle; succinate from succinyl-CoA (ligase route): step 1/1. Succinyl-CoA synthetase functions in the citric acid cycle (TCA), coupling the hydrolysis of succinyl-CoA to the synthesis of either ATP or GTP and thus represents the only step of substrate-level phosphorylation in the TCA. The beta subunit provides nucleotide specificity of the enzyme and binds the substrate succinate, while the binding sites for coenzyme A and phosphate are found in the alpha subunit. The sequence is that of Succinate--CoA ligase [ADP-forming] subunit beta from Campylobacter jejuni (strain RM1221).